The sequence spans 204 residues: MDYEIKTLDNGSAGTAVLPDEIFGVTPRADIMARVVHWQLAKRRAGTHKVKGMGEVSGTTKKPYRQKGTGSARQGSLRAPQYRTGGAVHGPVVRDHGYDLPKKVRRLGLISALSQKAAEGKLVVLDAATASGRTSELAAKVKALGWKSALIVDATVEENFGRAARNLPKIDALPTIGANVYDILNHDVLAITRAGVEGLKERLA.

The disordered stretch occupies residues 49-90 (KVKGMGEVSGTTKKPYRQKGTGSARQGSLRAPQYRTGGAVHG).

It belongs to the universal ribosomal protein uL4 family. Part of the 50S ribosomal subunit.

Its function is as follows. One of the primary rRNA binding proteins, this protein initially binds near the 5'-end of the 23S rRNA. It is important during the early stages of 50S assembly. It makes multiple contacts with different domains of the 23S rRNA in the assembled 50S subunit and ribosome. Functionally, forms part of the polypeptide exit tunnel. The protein is Large ribosomal subunit protein uL4 of Gluconacetobacter diazotrophicus (strain ATCC 49037 / DSM 5601 / CCUG 37298 / CIP 103539 / LMG 7603 / PAl5).